The chain runs to 36 residues: Fructose-1,6-/sedoheptulose-1,7-bisphosphate aldolase (36 aa).

The sequence is that of Fructose-1,6-/sedoheptulose-1,7-bisphosphate aldolase (cbbA) from Nitrobacter vulgaris.